The following is an 890-amino-acid chain: Protein translocase subunit SecA (890 aa).

ATP contacts are provided by residues Gln86, 104–108 (GEGKT), and Asp493. Positions 851-872 (EASHGDGDAKKAPVVKKEESGR) are enriched in basic and acidic residues. A disordered region spans residues 851–873 (EASHGDGDAKKAPVVKKEESGRN). Zn(2+) is bound by residues Cys876, Cys878, Cys887, and Cys888.

This sequence belongs to the SecA family. In terms of assembly, monomer and homodimer. Part of the essential Sec protein translocation apparatus which comprises SecA, SecYEG and auxiliary proteins SecDF. Other proteins may also be involved. It depends on Zn(2+) as a cofactor.

The protein resides in the cell membrane. It localises to the cytoplasm. The catalysed reaction is ATP + H2O + cellular proteinSide 1 = ADP + phosphate + cellular proteinSide 2.. In terms of biological role, part of the Sec protein translocase complex. Interacts with the SecYEG preprotein conducting channel. Has a central role in coupling the hydrolysis of ATP to the transfer of proteins into and across the cell membrane, serving as an ATP-driven molecular motor driving the stepwise translocation of polypeptide chains across the membrane. The polypeptide is Protein translocase subunit SecA (Alkaliphilus oremlandii (strain OhILAs) (Clostridium oremlandii (strain OhILAs))).